Consider the following 442-residue polypeptide: tRNA modification GTPase MnmE (442 aa).

The (6S)-5-formyl-5,6,7,8-tetrahydrofolate site is built by arginine 22, glutamate 79, and lysine 119. Residues 216–366 (GIKTCLVGAP…LLEKIKSIFA (151 aa)) enclose the TrmE-type G domain. Asparagine 226 provides a ligand contact to K(+). Residues 226–231 (NSGKSS), 245–251 (SEIPGTT), and 270–273 (DTAG) contribute to the GTP site. Serine 230 contacts Mg(2+). Residues serine 245, isoleucine 247, and threonine 250 each contribute to the K(+) site. Threonine 251 is a binding site for Mg(2+). Residue lysine 442 participates in (6S)-5-formyl-5,6,7,8-tetrahydrofolate binding.

It belongs to the TRAFAC class TrmE-Era-EngA-EngB-Septin-like GTPase superfamily. TrmE GTPase family. As to quaternary structure, homodimer. Heterotetramer of two MnmE and two MnmG subunits. It depends on K(+) as a cofactor.

Its subcellular location is the cytoplasm. Functionally, exhibits a very high intrinsic GTPase hydrolysis rate. Involved in the addition of a carboxymethylaminomethyl (cmnm) group at the wobble position (U34) of certain tRNAs, forming tRNA-cmnm(5)s(2)U34. The polypeptide is tRNA modification GTPase MnmE (Mesomycoplasma hyopneumoniae (strain 7448) (Mycoplasma hyopneumoniae)).